Here is a 398-residue protein sequence, read N- to C-terminus: 8-amino-7-oxononanoate synthase (398 aa).

Arginine 26 is a binding site for substrate. 113-114 lines the pyridoxal 5'-phosphate pocket; that stretch reads GF. Residue histidine 138 participates in substrate binding. Serine 181, histidine 209, and threonine 238 together coordinate pyridoxal 5'-phosphate. N6-(pyridoxal phosphate)lysine is present on lysine 241. Threonine 355 is a binding site for substrate.

It belongs to the class-II pyridoxal-phosphate-dependent aminotransferase family. BioF subfamily. In terms of assembly, homodimer. It depends on pyridoxal 5'-phosphate as a cofactor.

It catalyses the reaction 6-carboxyhexanoyl-[ACP] + L-alanine + H(+) = (8S)-8-amino-7-oxononanoate + holo-[ACP] + CO2. Its pathway is cofactor biosynthesis; biotin biosynthesis. Its function is as follows. Catalyzes the decarboxylative condensation of pimeloyl-[acyl-carrier protein] and L-alanine to produce 8-amino-7-oxononanoate (AON), [acyl-carrier protein], and carbon dioxide. In Aeromonas hydrophila subsp. hydrophila (strain ATCC 7966 / DSM 30187 / BCRC 13018 / CCUG 14551 / JCM 1027 / KCTC 2358 / NCIMB 9240 / NCTC 8049), this protein is 8-amino-7-oxononanoate synthase.